The following is a 257-amino-acid chain: Acetylglutamate kinase (257 aa).

Substrate is bound by residues 43-44 (GG), R65, and N157. ATP contacts are provided by residues 180–185 (DVSGIL) and 208–210 (IIT).

This sequence belongs to the acetylglutamate kinase family. ArgB subfamily. As to quaternary structure, homodimer.

The protein resides in the cytoplasm. It carries out the reaction N-acetyl-L-glutamate + ATP = N-acetyl-L-glutamyl 5-phosphate + ADP. Its pathway is amino-acid biosynthesis; L-arginine biosynthesis; N(2)-acetyl-L-ornithine from L-glutamate: step 2/4. Functionally, catalyzes the ATP-dependent phosphorylation of N-acetyl-L-glutamate. The protein is Acetylglutamate kinase of Enterobacter sp. (strain 638).